The primary structure comprises 57 residues: Large ribosomal subunit protein bL33 (57 aa).

This sequence belongs to the bacterial ribosomal protein bL33 family.

The polypeptide is Large ribosomal subunit protein bL33 (Akkermansia muciniphila (strain ATCC BAA-835 / DSM 22959 / JCM 33894 / BCRC 81048 / CCUG 64013 / CIP 107961 / Muc)).